The sequence spans 294 residues: Mitochondrial glycine transporter (294 aa).

Solcar repeat units follow at residues 5–84 (RRAT…IRQA), 102–186 (LNMY…MKVL), and 208–292 (ASTL…IVKK). Helical transmembrane passes span 11-36 (LIGG…TRLQ), 59-85 (GALP…RQAI), 108-133 (MFSG…VRYE), 161-184 (GFGA…DRMK), 212-238 (INGS…KTRM), and 267-285 (GISL…AWGI).

Belongs to the mitochondrial carrier (TC 2.A.29) family. SLC25A38 subfamily.

The protein localises to the mitochondrion inner membrane. The enzyme catalyses glycine(in) = glycine(out). Mitochondrial glycine transporter that imports glycine into the mitochondrial matrix. Plays an important role in providing glycine for the first enzymatic step in heme biosynthesis, the condensation of glycine with succinyl-CoA to produce 5-aminolevulinate (ALA) in the mitochondrial matrix. In Kluyveromyces lactis (strain ATCC 8585 / CBS 2359 / DSM 70799 / NBRC 1267 / NRRL Y-1140 / WM37) (Yeast), this protein is Mitochondrial glycine transporter.